The chain runs to 127 residues: Putative B3 domain-containing protein At4g12617 (127 aa).

Positions 35-127 form a DNA-binding region, TF-B3; that stretch reads IMMPKTLLEA…HTRLNFKHVA (93 aa).

The protein localises to the nucleus. The protein is Putative B3 domain-containing protein At4g12617 of Arabidopsis thaliana (Mouse-ear cress).